Reading from the N-terminus, the 399-residue chain is uncharacterized protein (399 aa).

Transmembrane regions (helical) follow at residues 19-39 (IFSINLLYMGILSGISYPLFV), 46-66 (VNLLFAIVIGAVFEIPLLLMY), 91-111 (FYTIFGISLWLTYVLSQPILG), 123-143 (QFEQFLIVESLFPLVLLIIAS), 146-166 (IYAKIVDILAIFQIIIAIFIA), 183-203 (LLSALLFDLSAFIFINAISYI), 225-247 (VAILSILDSYSNLNILFALMPIW), 283-303 (VLLLIFSTETIANVLENLLGF), 307-327 (FGLDGLLFIFWNFIIVAFAYL), 335-355 (LFSIVLTSLAIQIFLFFYLGY), and 369-389 (IEYTILRIMILPIIGAIVYLL).

The protein localises to the host membrane. Its function is as follows. Putative amino acid transporter. This is an uncharacterized protein from Saccharolobus islandicus (Sulfolobus islandicus).